A 289-amino-acid polypeptide reads, in one-letter code: Energy-coupling factor transporter ATP-binding protein EcfA2 (289 aa).

The ABC transporter domain maps to 3–245 (IEFKNVDYVY…QEWVKKHYLD (243 aa)). 40–47 (GHTGSGKS) lines the ATP pocket.

This sequence belongs to the ABC transporter superfamily. Energy-coupling factor EcfA family. In terms of assembly, forms a stable energy-coupling factor (ECF) transporter complex composed of 2 membrane-embedded substrate-binding proteins (S component), 2 ATP-binding proteins (A component) and 2 transmembrane proteins (T component).

The protein localises to the cell membrane. Functionally, ATP-binding (A) component of a common energy-coupling factor (ECF) ABC-transporter complex. Unlike classic ABC transporters this ECF transporter provides the energy necessary to transport a number of different substrates. The chain is Energy-coupling factor transporter ATP-binding protein EcfA2 from Lactobacillus johnsonii (strain CNCM I-12250 / La1 / NCC 533).